The following is a 95-amino-acid chain: Small ribosomal subunit protein bS18 (95 aa).

This sequence belongs to the bacterial ribosomal protein bS18 family. Part of the 30S ribosomal subunit. Forms a tight heterodimer with protein bS6.

Its function is as follows. Binds as a heterodimer with protein bS6 to the central domain of the 16S rRNA, where it helps stabilize the platform of the 30S subunit. The protein is Small ribosomal subunit protein bS18 of Rickettsia canadensis (strain McKiel).